The primary structure comprises 177 residues: GTP-dependent dephospho-CoA kinase (177 aa).

5 residues coordinate GTP: Asp45, Val46, Val47, Asp64, and Glu120.

This sequence belongs to the GTP-dependent DPCK family.

It carries out the reaction 3'-dephospho-CoA + GTP = GDP + CoA + H(+). Its pathway is cofactor biosynthesis; coenzyme A biosynthesis. In terms of biological role, catalyzes the GTP-dependent phosphorylation of the 3'-hydroxyl group of dephosphocoenzyme A to form coenzyme A (CoA). In Halobacterium salinarum (strain ATCC 29341 / DSM 671 / R1), this protein is GTP-dependent dephospho-CoA kinase.